Consider the following 1835-residue polypeptide: Protein TIC 214 (1835 aa).

6 helical membrane-spanning segments follow: residues 25 to 45 (VGLY…LFLL), 64 to 84 (FITG…HLAL), 87 to 107 (PHTI…WNNH), 124 to 144 (LSIQ…HFIL), 172 to 192 (VGWL…LFWI), and 221 to 241 (IFSI…PSPI). Positions 246–258 (LKETSETEERGES) are enriched in basic and acidic residues. Disordered regions lie at residues 246-304 (LKET…DGNQ), 735-759 (EFKT…KKEE), and 1535-1578 (NRNQ…KRQS). Over residues 259 to 268 (AEETDVEIET) the composition is skewed to acidic residues. The segment covering 1553–1569 (PRNRQKDLEKDYAESDI) has biased composition (basic and acidic residues).

It belongs to the TIC214 family. As to quaternary structure, part of the Tic complex.

The protein resides in the plastid. The protein localises to the chloroplast inner membrane. Involved in protein precursor import into chloroplasts. May be part of an intermediate translocation complex acting as a protein-conducting channel at the inner envelope. The polypeptide is Protein TIC 214 (Liriodendron tulipifera (Tuliptree)).